The following is a 447-amino-acid chain: 23S rRNA (uracil(1939)-C(5))-methyltransferase RlmD (447 aa).

In terms of domain architecture, TRAM spans 7 to 66; the sequence is RKPLSQEPQKASIEALTHEGRGIAHVAGKTVFIDGALPGETVWFHYLRRRGKFDEGRVLE. [4Fe-4S] cluster-binding residues include cysteine 79, cysteine 85, cysteine 88, and cysteine 168. S-adenosyl-L-methionine-binding residues include glutamine 275, phenylalanine 304, asparagine 309, glutamate 325, aspartate 352, and aspartate 374. Residue cysteine 400 is the Nucleophile of the active site.

This sequence belongs to the class I-like SAM-binding methyltransferase superfamily. RNA M5U methyltransferase family. RlmD subfamily.

The enzyme catalyses uridine(1939) in 23S rRNA + S-adenosyl-L-methionine = 5-methyluridine(1939) in 23S rRNA + S-adenosyl-L-homocysteine + H(+). Catalyzes the formation of 5-methyl-uridine at position 1939 (m5U1939) in 23S rRNA. The chain is 23S rRNA (uracil(1939)-C(5))-methyltransferase RlmD from Nitrosococcus oceani (strain ATCC 19707 / BCRC 17464 / JCM 30415 / NCIMB 11848 / C-107).